The sequence spans 505 residues: 2,3-bisphosphoglycerate-independent phosphoglycerate mutase (505 aa).

Positions 12 and 62 each coordinate Mn(2+). Catalysis depends on serine 62, which acts as the Phosphoserine intermediate. Substrate is bound by residues histidine 123, 153–154 (RD), arginine 185, arginine 191, 257–260 (RPDR), and lysine 330. Mn(2+) contacts are provided by aspartate 397, histidine 401, aspartate 438, histidine 439, and histidine 456.

Belongs to the BPG-independent phosphoglycerate mutase family. Monomer. Mn(2+) is required as a cofactor.

It carries out the reaction (2R)-2-phosphoglycerate = (2R)-3-phosphoglycerate. The protein operates within carbohydrate degradation; glycolysis; pyruvate from D-glyceraldehyde 3-phosphate: step 3/5. Functionally, catalyzes the interconversion of 2-phosphoglycerate and 3-phosphoglycerate. The chain is 2,3-bisphosphoglycerate-independent phosphoglycerate mutase from Staphylococcus aureus (strain MRSA252).